Here is a 497-residue protein sequence, read N- to C-terminus: Taxane 10-beta-hydroxylase (497 aa).

Cysteine 443 contributes to the heme binding site.

Belongs to the cytochrome P450 family. The cofactor is heme.

It catalyses the reaction taxa-4(20),11-dien-5alpha-yl acetate + reduced [NADPH--hemoprotein reductase] + O2 = 10beta-hydroxytaxa-4(20),11-dien-5alpha-yl acetate + oxidized [NADPH--hemoprotein reductase] + H2O + H(+). Its pathway is alkaloid biosynthesis; taxol biosynthesis; 10-deacetyl-2-debenzoylbaccatin III from taxa-4(20),11-dien-5alpha-ol: step 2/3. Involved in the transformation of a taxadienyl acetate by hydroxylation at C10 to yield taxadien-5-alpha-acetoxy-10-beta-ol. The sequence is that of Taxane 10-beta-hydroxylase (CYP725A1) from Taxus cuspidata (Japanese yew).